The sequence spans 197 residues: Small ribosomal subunit protein uS7 (197 aa).

It belongs to the universal ribosomal protein uS7 family.

This is Small ribosomal subunit protein uS7 (RPS5) from Cicer arietinum (Chickpea).